The primary structure comprises 488 residues: R3H and coiled-coil domain-containing protein 1 (488 aa).

In terms of domain architecture, R3H spans 16–81; the sequence is NDFVHRVQEE…KRRTVICHLD (66 aa). Disordered stretches follow at residues 87 to 180 and 195 to 322; these read SDGP…GDAE and KSPD…DADH. Positions 114–125 are enriched in low complexity; sequence GAAAGPRGAPAG. S232 is subject to Phosphoserine. A coiled-coil region spans residues 244 to 321; the sequence is SHGMRSLVDQ…EEDEDEADAD (78 aa). The segment covering 252 to 265 has biased composition (acidic residues); sequence DQEEEEIEGEEEEK. Basic and acidic residues-rich tracts occupy residues 266–280 and 287–301; these read VDEK…KERV and TDAQ…GERM. Acidic residues predominate over residues 302–319; it reads DEGEDKVDAEEEDEDEAD.

This is R3H and coiled-coil domain-containing protein 1 from Mus musculus (Mouse).